A 557-amino-acid polypeptide reads, in one-letter code: T-complex protein 1 subunit theta-like 2 (557 aa).

2 disordered regions span residues 1 to 33 and 531 to 557; these read MDSTVPSALELPQRLALNPRESPRSPEEEEPHL and EIWNPDSKKTKKHPPPVETKKILGLNN.

Belongs to the TCP-1 chaperonin family.

The protein resides in the cytoplasm. Functionally, possible molecular chaperone; assists the folding of proteins upon ATP hydrolysis. The chain is T-complex protein 1 subunit theta-like 2 (CCT8L2) from Homo sapiens (Human).